A 737-amino-acid polypeptide reads, in one-letter code: Dynein axonemal intermediate chain 7 homolog (737 aa).

Polar residues predominate over residues 1–15; sequence MPPKSPNRSGKSTPT. Disordered stretches follow at residues 1-61, 274-362, and 410-452; these read MPPK…ERRA, KKVK…DDEE, and STVK…QQPP. Basic and acidic residues-rich tracts occupy residues 18–61, 276–316, and 333–349; these read RPGE…ERRA, VKDE…EGRQ, and EETKKDENEGEKEDAVK. Polar residues-rich tracts occupy residues 417–429 and 441–451; these read DNPNTGRSSSRVA and PSKTPLEQQQP.

Belongs to the DNAI7 family.

In Ciona intestinalis (Transparent sea squirt), this protein is Dynein axonemal intermediate chain 7 homolog (AXP83.9).